Here is a 162-residue protein sequence, read N- to C-terminus: MGSMKEIFNSLFLKELLKGMSVTGKYFFARKITVQYPEEKTPQSFRFRGLHALRRYPNGEERCIACKLCEAICPALAITIEAEPRDDGSRRTTRYDIDLTKCIFCGFCEEACPVDAVVETRIFEYHGEKRGDLYYTKQMLLANGDRYEDQIAKDRELDASYR.

2 consecutive 4Fe-4S ferredoxin-type domains span residues 53 to 83 (LRRY…IEAE) and 93 to 122 (TRYD…ETRI). Residues cysteine 63, cysteine 66, cysteine 69, cysteine 73, cysteine 102, cysteine 105, cysteine 108, and cysteine 112 each contribute to the [4Fe-4S] cluster site.

It belongs to the complex I 23 kDa subunit family. NDH-1 is composed of 14 different subunits. Subunits NuoA, H, J, K, L, M, N constitute the membrane sector of the complex. Requires [4Fe-4S] cluster as cofactor.

Its subcellular location is the cell inner membrane. The catalysed reaction is a quinone + NADH + 5 H(+)(in) = a quinol + NAD(+) + 4 H(+)(out). In terms of biological role, NDH-1 shuttles electrons from NADH, via FMN and iron-sulfur (Fe-S) centers, to quinones in the respiratory chain. The immediate electron acceptor for the enzyme in this species is believed to be ubiquinone. Couples the redox reaction to proton translocation (for every two electrons transferred, four hydrogen ions are translocated across the cytoplasmic membrane), and thus conserves the redox energy in a proton gradient. In Dechloromonas aromatica (strain RCB), this protein is NADH-quinone oxidoreductase subunit I.